The chain runs to 220 residues: Sec-independent protein translocase protein TatB (220 aa).

Residues 1 to 21 traverse the membrane as a helical segment; that stretch reads MFDIGFSELLLVLVIGLVVLG. The tract at residues 190 to 220 is disordered; sequence VTKQQIDTIDSHGTDLSSAGPSRIHQPGGDQ.

The protein belongs to the TatB family. In terms of assembly, the Tat system comprises two distinct complexes: a TatABC complex, containing multiple copies of TatA, TatB and TatC subunits, and a separate TatA complex, containing only TatA subunits. Substrates initially bind to the TatABC complex, which probably triggers association of the separate TatA complex to form the active translocon.

Its subcellular location is the cell inner membrane. Its function is as follows. Part of the twin-arginine translocation (Tat) system that transports large folded proteins containing a characteristic twin-arginine motif in their signal peptide across membranes. Together with TatC, TatB is part of a receptor directly interacting with Tat signal peptides. TatB may form an oligomeric binding site that transiently accommodates folded Tat precursor proteins before their translocation. This is Sec-independent protein translocase protein TatB from Yersinia pseudotuberculosis serotype I (strain IP32953).